The chain runs to 356 residues: Peptide chain release factor 1 (356 aa).

Gln-230 carries the post-translational modification N5-methylglutamine. A compositionally biased stretch (basic and acidic residues) spans 279 to 289 (ALDSARSEARK). The tract at residues 279 to 299 (ALDSARSEARKSQVGSGDRSE) is disordered.

This sequence belongs to the prokaryotic/mitochondrial release factor family. In terms of processing, methylated by PrmC. Methylation increases the termination efficiency of RF1.

It is found in the cytoplasm. Its function is as follows. Peptide chain release factor 1 directs the termination of translation in response to the peptide chain termination codons UAG and UAA. In Caulobacter vibrioides (strain ATCC 19089 / CIP 103742 / CB 15) (Caulobacter crescentus), this protein is Peptide chain release factor 1 (prfA).